A 338-amino-acid polypeptide reads, in one-letter code: D-xylulose reductase (338 aa).

Residues C40, H65, and E151 each coordinate Zn(2+).

The protein belongs to the zinc-containing alcohol dehydrogenase family. Homotetramer. Zn(2+) serves as cofactor.

It carries out the reaction xylitol + NAD(+) = D-xylulose + NADH + H(+). The chain is D-xylulose reductase from Morganella morganii (Proteus morganii).